The primary structure comprises 324 residues: Glutamyl-Q tRNA(Asp) synthetase (324 aa).

L-glutamate contacts are provided by residues 5 to 9 (RLAPS) and E41. The 'HIGH' region motif lies at 8–18 (PSPTGNIHLGN). Zn(2+)-binding residues include C105, C107, Y128, and C132. Residues Y193 and R211 each coordinate L-glutamate. The 'KMSKS' region signature appears at 249–253 (RLAKR). K252 contacts ATP.

Belongs to the class-I aminoacyl-tRNA synthetase family. GluQ subfamily. Zn(2+) serves as cofactor.

In terms of biological role, catalyzes the tRNA-independent activation of glutamate in presence of ATP and the subsequent transfer of glutamate onto a tRNA(Asp). Glutamate is transferred on the 2-amino-5-(4,5-dihydroxy-2-cyclopenten-1-yl) moiety of the queuosine in the wobble position of the QUC anticodon. In Nitratidesulfovibrio vulgaris (strain ATCC 29579 / DSM 644 / CCUG 34227 / NCIMB 8303 / VKM B-1760 / Hildenborough) (Desulfovibrio vulgaris), this protein is Glutamyl-Q tRNA(Asp) synthetase.